The sequence spans 208 residues: Large ribosomal subunit protein uL3 (208 aa).

The segment at 117–147 is disordered; the sequence is FQGVIKRHGQSRGPMAHGSRYHRRPGSMGPV.

This sequence belongs to the universal ribosomal protein uL3 family. As to quaternary structure, part of the 50S ribosomal subunit. Forms a cluster with proteins L14 and L19.

Its function is as follows. One of the primary rRNA binding proteins, it binds directly near the 3'-end of the 23S rRNA, where it nucleates assembly of the 50S subunit. This chain is Large ribosomal subunit protein uL3, found in Streptococcus equi subsp. zooepidemicus (strain H70).